A 314-amino-acid polypeptide reads, in one-letter code: Ornithine carbamoyltransferase (314 aa).

Carbamoyl phosphate contacts are provided by residues 58–61, Q85, R109, and 136–139; these read STRT and HPAQ. Residues N169, D233, and 237–238 contribute to the L-ornithine site; that span reads SM. Carbamoyl phosphate-binding positions include 273–274 and R301; that span reads CL.

The protein belongs to the aspartate/ornithine carbamoyltransferase superfamily. OTCase family.

It localises to the cytoplasm. The catalysed reaction is carbamoyl phosphate + L-ornithine = L-citrulline + phosphate + H(+). The protein operates within amino-acid degradation; L-arginine degradation via ADI pathway; carbamoyl phosphate from L-arginine: step 2/2. Functionally, reversibly catalyzes the transfer of the carbamoyl group from carbamoyl phosphate (CP) to the N(epsilon) atom of ornithine (ORN) to produce L-citrulline. In Staphylothermus marinus (strain ATCC 43588 / DSM 3639 / JCM 9404 / F1), this protein is Ornithine carbamoyltransferase.